A 247-amino-acid chain; its full sequence is Carboxy-S-adenosyl-L-methionine synthase (247 aa).

Residues Tyr39, 89–90, 117–118, Asn132, and Arg199 contribute to the S-adenosyl-L-methionine site; these read DN and DI.

This sequence belongs to the class I-like SAM-binding methyltransferase superfamily. Cx-SAM synthase family. As to quaternary structure, homodimer.

The enzyme catalyses prephenate + S-adenosyl-L-methionine = carboxy-S-adenosyl-L-methionine + 3-phenylpyruvate + H2O. Catalyzes the conversion of S-adenosyl-L-methionine (SAM) to carboxy-S-adenosyl-L-methionine (Cx-SAM). The protein is Carboxy-S-adenosyl-L-methionine synthase of Sodalis glossinidius (strain morsitans).